The following is a 173-amino-acid chain: Putative metal-dependent hydrolase BCE_2729 (173 aa).

The Zn(2+) site is built by histidine 65, histidine 156, and histidine 160.

This sequence belongs to the metal hydrolase YfiT family. Homodimer. Requires Zn(2+) as cofactor.

The protein resides in the cytoplasm. In terms of biological role, possible metal-dependent hydrolase. The sequence is that of Putative metal-dependent hydrolase BCE_2729 from Bacillus cereus (strain ATCC 10987 / NRS 248).